The following is a 295-amino-acid chain: Succinate dehydrogenase assembly factor 2, mitochondrial (295 aa).

Disordered regions lie at residues 35-90, 208-227, and 269-295; these read AKDN…PELL, PEEG…RTGA, and TGFH…VFDS. Residues 45–75 are compositionally biased toward polar residues; that stretch reads STPSTAPEYRQNQTSKPPNQFMPNSTSTMTN.

The protein belongs to the SDHAF2 family. As to quaternary structure, interacts with the flavoprotein subunit within the SDH catalytic dimer.

The protein localises to the mitochondrion matrix. Functionally, plays an essential role in the assembly of succinate dehydrogenase (SDH), an enzyme complex (also referred to as respiratory complex II) that is a component of both the tricarboxylic acid (TCA) cycle and the mitochondrial electron transport chain, and which couples the oxidation of succinate to fumarate with the reduction of ubiquinone (coenzyme Q) to ubiquinol. Required for flavinylation (covalent attachment of FAD) of the flavoprotein subunit of the SDH catalytic dimer. The chain is Succinate dehydrogenase assembly factor 2, mitochondrial from Aspergillus terreus (strain NIH 2624 / FGSC A1156).